A 401-amino-acid chain; its full sequence is Argininosuccinate synthase (401 aa).

Ala9–Ser17 lines the ATP pocket. Tyr86 contributes to the L-citrulline binding site. Gly116 provides a ligand contact to ATP. L-aspartate contacts are provided by Thr118, Asn122, and Asp123. Asn122 serves as a coordination point for L-citrulline. Residues Arg126, Ser174, Ser183, Glu259, and Tyr271 each contribute to the L-citrulline site.

The protein belongs to the argininosuccinate synthase family. Type 1 subfamily. In terms of assembly, homotetramer.

It localises to the cytoplasm. The enzyme catalyses L-citrulline + L-aspartate + ATP = 2-(N(omega)-L-arginino)succinate + AMP + diphosphate + H(+). Its pathway is amino-acid biosynthesis; L-arginine biosynthesis; L-arginine from L-ornithine and carbamoyl phosphate: step 2/3. This Bacillus cereus (strain AH820) protein is Argininosuccinate synthase.